Here is a 283-residue protein sequence, read N- to C-terminus: 2-dehydro-3-deoxyphosphooctonate aldolase (283 aa).

The protein belongs to the KdsA family.

Its subcellular location is the cytoplasm. It carries out the reaction D-arabinose 5-phosphate + phosphoenolpyruvate + H2O = 3-deoxy-alpha-D-manno-2-octulosonate-8-phosphate + phosphate. Its pathway is carbohydrate biosynthesis; 3-deoxy-D-manno-octulosonate biosynthesis; 3-deoxy-D-manno-octulosonate from D-ribulose 5-phosphate: step 2/3. The protein operates within bacterial outer membrane biogenesis; lipopolysaccharide biosynthesis. In Vibrio cholerae serotype O1 (strain ATCC 39315 / El Tor Inaba N16961), this protein is 2-dehydro-3-deoxyphosphooctonate aldolase.